The chain runs to 296 residues: Cobalamin trafficking protein CblD (296 aa).

Residues 1–38 constitute a mitochondrion transit peptide; that stretch reads MAHVLCNRARLVSYLPGFCSLVKRVINPRAFSTAGSSG. N6-acetyllysine is present on Lys203.

In terms of assembly, heterodimer with MMACHC. Forms a multiprotein complex with MMACHC, MTR and MTRR.

It localises to the cytoplasm. Its subcellular location is the mitochondrion. Its function is as follows. Involved in cobalamin metabolism and trafficking. Plays a role in regulating the biosynthesis and the proportion of two coenzymes, methylcob(III)alamin (MeCbl) and 5'-deoxyadenosylcobalamin (AdoCbl). Promotes oxidation of cob(II)alamin bound to MMACHC. The processing of cobalamin in the cytosol occurs in a multiprotein complex composed of at least MMACHC, MMADHC, MTRR (methionine synthase reductase) and MTR (methionine synthase) which may contribute to shuttle safely and efficiently cobalamin towards MTR in order to produce methionine. The polypeptide is Cobalamin trafficking protein CblD (Mus musculus (Mouse)).